The chain runs to 170 residues: Adenine phosphoribosyltransferase (170 aa).

It belongs to the purine/pyrimidine phosphoribosyltransferase family. In terms of assembly, homodimer.

The protein resides in the cytoplasm. It catalyses the reaction AMP + diphosphate = 5-phospho-alpha-D-ribose 1-diphosphate + adenine. The protein operates within purine metabolism; AMP biosynthesis via salvage pathway; AMP from adenine: step 1/1. In terms of biological role, catalyzes a salvage reaction resulting in the formation of AMP, that is energically less costly than de novo synthesis. This Bacillus mycoides (strain KBAB4) (Bacillus weihenstephanensis) protein is Adenine phosphoribosyltransferase.